The following is a 408-amino-acid chain: Peptidase T (408 aa).

His79 serves as a coordination point for Zn(2+). Asp81 is a catalytic residue. Position 139 (Asp139) interacts with Zn(2+). The active-site Proton acceptor is Glu173. Glu174, Asp196, and His378 together coordinate Zn(2+).

It belongs to the peptidase M20B family. The cofactor is Zn(2+).

The protein resides in the cytoplasm. The catalysed reaction is Release of the N-terminal residue from a tripeptide.. Cleaves the N-terminal amino acid of tripeptides. The sequence is that of Peptidase T from Shouchella clausii (strain KSM-K16) (Alkalihalobacillus clausii).